Consider the following 85-residue polypeptide: Large ribosomal subunit protein uL23 (85 aa).

Belongs to the universal ribosomal protein uL23 family. Part of the 50S ribosomal subunit. Interacts with protein L29 and weakly with protein L39e.

In terms of biological role, binds to a specific region on the 23S rRNA. Located at the polypeptide exit tunnel on the outside of the subunit. This chain is Large ribosomal subunit protein uL23, found in Haloarcula marismortui (strain ATCC 43049 / DSM 3752 / JCM 8966 / VKM B-1809) (Halobacterium marismortui).